Here is an 833-residue protein sequence, read N- to C-terminus: DNA ligase (833 aa).

NAD(+) contacts are provided by residues 35 to 39 (DADYD), 84 to 85 (SL), and E115. K117 functions as the N6-AMP-lysine intermediate in the catalytic mechanism. Residues R138, E175, K292, and K316 each coordinate NAD(+). Positions 410, 413, 428, and 434 each coordinate Zn(2+). The BRCT domain maps to 750-833 (LQTGPLDGQT…AFLGDHGQQP (84 aa)).

This sequence belongs to the NAD-dependent DNA ligase family. LigA subfamily. It depends on Mg(2+) as a cofactor. Mn(2+) is required as a cofactor.

The enzyme catalyses NAD(+) + (deoxyribonucleotide)n-3'-hydroxyl + 5'-phospho-(deoxyribonucleotide)m = (deoxyribonucleotide)n+m + AMP + beta-nicotinamide D-nucleotide.. In terms of biological role, DNA ligase that catalyzes the formation of phosphodiester linkages between 5'-phosphoryl and 3'-hydroxyl groups in double-stranded DNA using NAD as a coenzyme and as the energy source for the reaction. It is essential for DNA replication and repair of damaged DNA. The protein is DNA ligase of Xanthomonas euvesicatoria pv. vesicatoria (strain 85-10) (Xanthomonas campestris pv. vesicatoria).